Reading from the N-terminus, the 305-residue chain is Ribonuclease BN (305 aa).

Residues His64, His66, Asp68, His69, His141, Asp212, and His270 each coordinate Zn(2+). Asp68 (proton acceptor) is an active-site residue.

This sequence belongs to the RNase Z family. RNase BN subfamily. As to quaternary structure, homodimer. The cofactor is Zn(2+).

Zinc phosphodiesterase, which has both exoribonuclease and endoribonuclease activities. This chain is Ribonuclease BN, found in Shigella boydii serotype 18 (strain CDC 3083-94 / BS512).